Here is a 97-residue protein sequence, read N- to C-terminus: UPF0416 protein RC0826 (97 aa).

Positions 1–33 (MRIFVKAAISTAAWRFYAHPTVAMGICVGTALA) are cleaved as a signal peptide.

It belongs to the UPF0416 family.

The sequence is that of UPF0416 protein RC0826 from Rickettsia conorii (strain ATCC VR-613 / Malish 7).